The chain runs to 202 residues: Orotate phosphoribosyltransferase (202 aa).

Residues Lys93 and 113–121 (EDIITTGGS) each bind 5-phospho-alpha-D-ribose 1-diphosphate. Positions 117 and 145 each coordinate orotate.

The protein belongs to the purine/pyrimidine phosphoribosyltransferase family. PyrE subfamily. In terms of assembly, homodimer. The cofactor is Mg(2+).

It catalyses the reaction orotidine 5'-phosphate + diphosphate = orotate + 5-phospho-alpha-D-ribose 1-diphosphate. Its pathway is pyrimidine metabolism; UMP biosynthesis via de novo pathway; UMP from orotate: step 1/2. Catalyzes the transfer of a ribosyl phosphate group from 5-phosphoribose 1-diphosphate to orotate, leading to the formation of orotidine monophosphate (OMP). The sequence is that of Orotate phosphoribosyltransferase from Campylobacter jejuni subsp. jejuni serotype O:2 (strain ATCC 700819 / NCTC 11168).